A 117-amino-acid polypeptide reads, in one-letter code: Antitoxin RelB3 (117 aa).

Its function is as follows. Antitoxin component of a type II toxin-antitoxin (TA) system. Neutralizes the effect of cognate toxin RelE3, but no other RelE or ParE toxin. The chain is Antitoxin RelB3 (relB3) from Caulobacter vibrioides (strain ATCC 19089 / CIP 103742 / CB 15) (Caulobacter crescentus).